Reading from the N-terminus, the 186-residue chain is ADP-ribosylation factor-like protein 8A (186 aa).

The segment at residues 1–19 (MIALFNKLLDWFKALFWKE) is an intramembrane region (note=Mediates targeting to membranes). Residues 29 to 35 (QYSGKTT), 71 to 75 (DIGGQ), and 130 to 133 (NKRD) each bind GTP.

The protein belongs to the small GTPase superfamily. Arf family. Interacts with PLEKHM1. When GTP-bound, interacts with RUFY3 and RUFY4, but not with RUFY1, nor RUFY2.

Its subcellular location is the late endosome membrane. It is found in the lysosome membrane. The protein localises to the cytoplasm. The protein resides in the cytoskeleton. It localises to the spindle. Its subcellular location is the cell projection. It is found in the axon. The protein localises to the synapse. Plays a role in lysosomes motility. In neurons, mediates the anterograde axonal long-range transport of presynaptic lysosome-related vesicles required for presynaptic biogenesis and synaptic function. May play a role in chromosome segregation. The chain is ADP-ribosylation factor-like protein 8A (Arl8a) from Mus musculus (Mouse).